The following is a 1009-amino-acid chain: Protein translocase subunit SecA (1009 aa).

Residues glutamine 86, 104 to 108 (GEGKT), and aspartate 497 contribute to the ATP site. 2 disordered regions span residues 869–894 (AVPQPAGASGPALQPVPAATAPGQQP) and 949–1009 (ERRP…RNAG). Composition is skewed to low complexity over residues 883–894 (PVPAATAPGQQP) and 953–973 (SGAAARGPSPASASRQRAGAG). 4 residues coordinate Zn(2+): cysteine 990, cysteine 992, cysteine 1001, and histidine 1002.

The protein belongs to the SecA family. Monomer and homodimer. Part of the essential Sec protein translocation apparatus which comprises SecA, SecYEG and auxiliary proteins SecDF. Other proteins may also be involved. Requires Zn(2+) as cofactor.

The protein localises to the cell membrane. Its subcellular location is the cytoplasm. The enzyme catalyses ATP + H2O + cellular proteinSide 1 = ADP + phosphate + cellular proteinSide 2.. Functionally, part of the Sec protein translocase complex. Interacts with the SecYEG preprotein conducting channel. Has a central role in coupling the hydrolysis of ATP to the transfer of proteins into and across the cell membrane, serving as an ATP-driven molecular motor driving the stepwise translocation of polypeptide chains across the membrane. The polypeptide is Protein translocase subunit SecA (Acidothermus cellulolyticus (strain ATCC 43068 / DSM 8971 / 11B)).